The following is a 501-amino-acid chain: MQIKIEGIHDDRLHRPLQNIANLFYEECELAYGGEEPADFVISLALSQTDEHVTVSGEVKGTGIKEQHTKFFSPDMTEKEAFKQVKNTISYVYLNLLQAHTGITQKWGILTGIRPTKLLHKKLQSGMSKEQAHAELKKDYLIHDEKIMLMQEIVDRQLAAVPDLYRVKDEVSIYIGIPFCPTKCAYCTFPAYAIQGQAGRVGSFLWGLHYEMQKIGEWLKEHDVKVTTIYFGGGTPTSITAEEMDLLYEEMVRSFPDVKNIREITVEAGRPDTITEEKLAVLNKYDIDRISINPQSYENETLKAIGRHHTVEETIEKYHLSRQHGMNNINMDLIIGLPGEGVKEFRHSLSETEKLMPESLTVHTLSFKRASEMTRNKHKYKVAGREEVSQMMEDAVAWTKEHGYVPYYLYRQKNILGNLENVGYSLPGQESIYNIMIMEEVQTIIGIGCGAASKFIDRDTGKITHFANPKDPKSYNERFEHYTDEKIKYLEQIFEKTTKQH.

A Radical SAM core domain is found at aspartate 163–valine 405. Tyrosine 174 serves as a coordination point for S-adenosyl-L-methionine. [4Fe-4S] cluster contacts are provided by cysteine 180 and cysteine 184. Tyrosine 186 is an S-adenosyl-L-methionine binding site. Cysteine 187 is a [4Fe-4S] cluster binding site. Residues glycine 233, glycine 234–threonine 235, glutamate 267, glutamine 295, arginine 307, and aspartate 332 contribute to the S-adenosyl-L-methionine site.

Belongs to the anaerobic coproporphyrinogen-III oxidase family. HemZ subfamily. It depends on [4Fe-4S] cluster as a cofactor.

Its pathway is porphyrin-containing compound metabolism; protoporphyrin-IX biosynthesis. Involved in the biosynthesis of porphyrin-containing compound. This Bacillus subtilis (strain 168) protein is Oxygen-independent coproporphyrinogen-III oxidase-like protein HemZ (hemZ).